The primary structure comprises 332 residues: Phosphate acyltransferase (332 aa).

This sequence belongs to the PlsX family. Homodimer. Probably interacts with PlsY.

The protein localises to the cytoplasm. It catalyses the reaction a fatty acyl-[ACP] + phosphate = an acyl phosphate + holo-[ACP]. Its pathway is lipid metabolism; phospholipid metabolism. Catalyzes the reversible formation of acyl-phosphate (acyl-PO(4)) from acyl-[acyl-carrier-protein] (acyl-ACP). This enzyme utilizes acyl-ACP as fatty acyl donor, but not acyl-CoA. The chain is Phosphate acyltransferase from Thermoanaerobacter pseudethanolicus (strain ATCC 33223 / 39E) (Clostridium thermohydrosulfuricum).